The sequence spans 490 residues: Glutamate--tRNA ligase (490 aa).

The 'HIGH' region signature appears at 10–20 (PSPTGSLHIGG). Positions 251-255 (KLSKR) match the 'KMSKS' region motif. Residue K254 participates in ATP binding.

The protein belongs to the class-I aminoacyl-tRNA synthetase family. Glutamate--tRNA ligase type 1 subfamily. In terms of assembly, monomer.

It localises to the cytoplasm. The enzyme catalyses tRNA(Glu) + L-glutamate + ATP = L-glutamyl-tRNA(Glu) + AMP + diphosphate. Its function is as follows. Catalyzes the attachment of glutamate to tRNA(Glu) in a two-step reaction: glutamate is first activated by ATP to form Glu-AMP and then transferred to the acceptor end of tRNA(Glu). This chain is Glutamate--tRNA ligase, found in Moorella thermoacetica (strain ATCC 39073 / JCM 9320).